A 497-amino-acid chain; its full sequence is Meiosis-specific serine/threonine-protein kinase MEK1 (497 aa).

Positions 47–102 (VKVGRNDKECQLVLTNPSISSVHCVFWCVFFDEDSIPMFYVKDCSLNGTYLNGLLL) constitute an FHA domain. Residues 162–444 (EITNRIVGNG…SKQGLKHIWI (283 aa)) form the Protein kinase domain. ATP is bound by residues 168–176 (VGNGTFGHV) and lysine 199. Aspartate 290 serves as the catalytic Proton acceptor.

The protein belongs to the protein kinase superfamily. CAMK Ser/Thr protein kinase family. CHEK2 subfamily.

It carries out the reaction L-seryl-[protein] + ATP = O-phospho-L-seryl-[protein] + ADP + H(+). It catalyses the reaction L-threonyl-[protein] + ATP = O-phospho-L-threonyl-[protein] + ADP + H(+). Probable protein kinase required for meiotic recombination. The protein is Meiosis-specific serine/threonine-protein kinase MEK1 (MEK1) of Saccharomyces cerevisiae (strain ATCC 204508 / S288c) (Baker's yeast).